The following is a 429-amino-acid chain: 3-phosphoshikimate 1-carboxyvinyltransferase (429 aa).

Lys-11, Ser-12, and Arg-16 together coordinate 3-phosphoshikimate. Lys-11 serves as a coordination point for phosphoenolpyruvate. Phosphoenolpyruvate contacts are provided by Gly-82 and Arg-110. Residues Ser-155, Gln-157, Asp-302, and Lys-329 each contribute to the 3-phosphoshikimate site. A phosphoenolpyruvate-binding site is contributed by Gln-157. Residue Asp-302 is the Proton acceptor of the active site. Positions 333 and 385 each coordinate phosphoenolpyruvate.

This sequence belongs to the EPSP synthase family. In terms of assembly, monomer.

Its subcellular location is the cytoplasm. It carries out the reaction 3-phosphoshikimate + phosphoenolpyruvate = 5-O-(1-carboxyvinyl)-3-phosphoshikimate + phosphate. Its pathway is metabolic intermediate biosynthesis; chorismate biosynthesis; chorismate from D-erythrose 4-phosphate and phosphoenolpyruvate: step 6/7. Its function is as follows. Catalyzes the transfer of the enolpyruvyl moiety of phosphoenolpyruvate (PEP) to the 5-hydroxyl of shikimate-3-phosphate (S3P) to produce enolpyruvyl shikimate-3-phosphate and inorganic phosphate. In Helicobacter acinonychis (strain Sheeba), this protein is 3-phosphoshikimate 1-carboxyvinyltransferase.